A 322-amino-acid chain; its full sequence is Ribonuclease Z (322 aa).

Residues H62, H64, D66, H67, H143, D215, and H273 each coordinate Zn(2+). D66 functions as the Proton acceptor in the catalytic mechanism. Residues 300-314 show a composition bias toward basic and acidic residues; that stretch reads ELRRYELDPREKEPD. Positions 300–322 are disordered; sequence ELRRYELDPREKEPDPVGPADES.

The protein belongs to the RNase Z family. In terms of assembly, homodimer. Zn(2+) serves as cofactor.

It carries out the reaction Endonucleolytic cleavage of RNA, removing extra 3' nucleotides from tRNA precursor, generating 3' termini of tRNAs. A 3'-hydroxy group is left at the tRNA terminus and a 5'-phosphoryl group is left at the trailer molecule.. Zinc phosphodiesterase, which displays some tRNA 3'-processing endonuclease activity. Probably involved in tRNA maturation, by removing a 3'-trailer from precursor tRNA. This Salinibacter ruber (strain DSM 13855 / M31) protein is Ribonuclease Z.